The following is a 176-amino-acid chain: Membrane glycoprotein UL144 (176 aa).

The N-terminal stretch at 1-20 (MKPLIMLICFAVILLQLGVT) is a signal peptide. 2 TNFR-Cys repeats span residues 22-56 (VCQHNEVQLGNECCPPCGSGQRVTKVCTDYTSVTC) and 58-95 (PCPNGTYVSGLYNCTDCTQCNVTQVMIRNCTSTNNTVC). 6 disulfides stabilise this stretch: cysteine 23-cysteine 34, cysteine 35-cysteine 48, cysteine 38-cysteine 56, cysteine 59-cysteine 71, cysteine 74-cysteine 87, and cysteine 77-cysteine 95. Residues 134–154 (LAWLSLFIFLVGIILLILYLI) form a helical membrane-spanning segment.

Interacts with host TRIM23; this interaction causes auto-ubiquitination of TRAF6, leading to NF-kappaB activation.

The protein resides in the membrane. In terms of biological role, activates NF-kappaB in a tumor necrosis factor receptor (TNFR)-associated factor 6 (TRAF6)-dependent manner, causing the up-regulation of the chemokine CCL22. The chain is Membrane glycoprotein UL144 (UL144) from Homo sapiens (Human).